Reading from the N-terminus, the 212-residue chain is Large ribosomal subunit protein uL1 (212 aa).

This sequence belongs to the universal ribosomal protein uL1 family. Part of the 50S ribosomal subunit.

In terms of biological role, binds directly to 23S rRNA. Probably involved in E site tRNA release. Its function is as follows. Protein L1 is also a translational repressor protein, it controls the translation of its operon by binding to its mRNA. This Halobacterium salinarum (strain ATCC 29341 / DSM 671 / R1) protein is Large ribosomal subunit protein uL1.